A 236-amino-acid polypeptide reads, in one-letter code: Glucosamine-6-phosphate deaminase (236 aa).

Asp67 functions as the Proton acceptor; for enolization step in the catalytic mechanism. Asn136 functions as the For ring-opening step in the catalytic mechanism. His138 acts as the Proton acceptor; for ring-opening step in catalysis. Glu143 acts as the For ring-opening step in catalysis.

The protein belongs to the glucosamine/galactosamine-6-phosphate isomerase family. NagB subfamily.

The enzyme catalyses alpha-D-glucosamine 6-phosphate + H2O = beta-D-fructose 6-phosphate + NH4(+). It participates in amino-sugar metabolism; N-acetylneuraminate degradation; D-fructose 6-phosphate from N-acetylneuraminate: step 5/5. Catalyzes the reversible isomerization-deamination of glucosamine 6-phosphate (GlcN6P) to form fructose 6-phosphate (Fru6P) and ammonium ion. This chain is Glucosamine-6-phosphate deaminase, found in Lachnoclostridium phytofermentans (strain ATCC 700394 / DSM 18823 / ISDg) (Clostridium phytofermentans).